A 497-amino-acid polypeptide reads, in one-letter code: Cytochrome P450 2D6 (497 aa).

Substrate is bound at residue Asp301. Cys443 provides a ligand contact to heme.

Belongs to the cytochrome P450 family. It depends on heme as a cofactor.

It is found in the endoplasmic reticulum membrane. The protein localises to the microsome membrane. The catalysed reaction is (5Z,8Z,11Z,14Z)-eicosatetraenoate + reduced [NADPH--hemoprotein reductase] + O2 = (8R,9S)-epoxy-(5Z,11Z,14Z)-eicosatrienoate + oxidized [NADPH--hemoprotein reductase] + H2O + H(+). It carries out the reaction (5Z,8Z,11Z,14Z)-eicosatetraenoate + reduced [NADPH--hemoprotein reductase] + O2 = (11R,12S)-epoxy-(5Z,8Z,14Z)-eicosatrienoate + oxidized [NADPH--hemoprotein reductase] + H2O + H(+). The enzyme catalyses (5Z,8Z,11Z,14Z)-eicosatetraenoate + reduced [NADPH--hemoprotein reductase] + O2 = (14S,15R)-epoxy-(5Z,8Z,11Z)-eicosatrienoate + oxidized [NADPH--hemoprotein reductase] + H2O + H(+). It catalyses the reaction N-(5Z,8Z,11Z,14Z-eicosatetraenoyl)-ethanolamine + reduced [NADPH--hemoprotein reductase] + O2 = N-(8,9-epoxy-5Z,11Z,14Z-eicosatrienoyl)-ethanolamine + oxidized [NADPH--hemoprotein reductase] + H2O + H(+). The catalysed reaction is N-(5Z,8Z,11Z,14Z-eicosatetraenoyl)-ethanolamine + reduced [NADPH--hemoprotein reductase] + O2 = N-(11,12-epoxy-5Z,8Z,14Z-eicosatrienoyl)-ethanolamine + oxidized [NADPH--hemoprotein reductase] + H2O + H(+). It carries out the reaction N-(5Z,8Z,11Z,14Z-eicosatetraenoyl)-ethanolamine + reduced [NADPH--hemoprotein reductase] + O2 = N-(14,15-epoxy-5Z,8Z,11Z-eicosatrienoyl)-ethanolamine + oxidized [NADPH--hemoprotein reductase] + H2O + H(+). The enzyme catalyses N-(5Z,8Z,11Z,14Z-eicosatetraenoyl)-ethanolamine + reduced [NADPH--hemoprotein reductase] + O2 = N-(20-hydroxy-5Z,8Z,11Z,14Z-eicosatetraenoyl)-ethanolamine + oxidized [NADPH--hemoprotein reductase] + H2O + H(+). It catalyses the reaction (5Z,8Z,11Z,14Z,17Z)-eicosapentaenoate + reduced [NADPH--hemoprotein reductase] + O2 = (17S,18R)-epoxy-(5Z,8Z,11Z,14Z)-eicosatetraenoate + oxidized [NADPH--hemoprotein reductase] + H2O + H(+). The catalysed reaction is (4Z,7Z,10Z,13Z,16Z,19Z)-docosahexaenoate + reduced [NADPH--hemoprotein reductase] + O2 = (19R,20S)-epoxy-(4Z,7Z,10Z,13Z,16Z)-docosapentaenoate + oxidized [NADPH--hemoprotein reductase] + H2O + H(+). It carries out the reaction (4Z,7Z,10Z,13Z,16Z,19Z)-docosahexaenoate + reduced [NADPH--hemoprotein reductase] + O2 = (19S,20R)-epoxy-(4Z,7Z,10Z,13Z,16Z)-docosapentaenoate + oxidized [NADPH--hemoprotein reductase] + H2O + H(+). The enzyme catalyses cholesterol + reduced [NADPH--hemoprotein reductase] + O2 = 25-hydroxycholesterol + oxidized [NADPH--hemoprotein reductase] + H2O + H(+). It catalyses the reaction all-trans-retinol + reduced [NADPH--hemoprotein reductase] + O2 = all-trans-retinal + oxidized [NADPH--hemoprotein reductase] + 2 H2O + H(+). It functions in the pathway cofactor metabolism; retinol metabolism. It participates in lipid metabolism; fatty acid metabolism. Its pathway is steroid metabolism; cholesterol metabolism. Functionally, a cytochrome P450 monooxygenase involved in the metabolism of fatty acids, steroids and retinoids. Mechanistically, uses molecular oxygen inserting one oxygen atom into a substrate, and reducing the second into a water molecule, with two electrons provided by NADPH via cytochrome P450 reductase (NADPH--hemoprotein reductase). Catalyzes the epoxidation of double bonds of polyunsaturated fatty acids (PUFA). Metabolizes endocannabinoid arachidonoylethanolamide (anandamide) to 20-hydroxyeicosatetraenoic acid ethanolamide (20-HETE-EA) and 8,9-, 11,12-, and 14,15-epoxyeicosatrienoic acid ethanolamides (EpETrE-EAs), potentially modulating endocannabinoid system signaling. Catalyzes the hydroxylation of carbon-hydrogen bonds. Metabolizes cholesterol toward 25-hydroxycholesterol, a physiological regulator of cellular cholesterol homeostasis. Catalyzes the oxidative transformations of all-trans retinol to all-trans retinal, a precursor for the active form all-trans-retinoic acid. Also involved in the oxidative metabolism of drugs such as antiarrhythmics, adrenoceptor antagonists, and tricyclic antidepressants. The protein is Cytochrome P450 2D6 (CYP2D6) of Pan troglodytes (Chimpanzee).